The sequence spans 191 residues: Cell division protein SepF (191 aa).

The span at 156-167 shows a compositional bias: polar residues; the sequence is EEASPSNMSNKG. A disordered region spans residues 156–191; the sequence is EEASPSNMSNKGNDLISKETSPAPEPAWGETVATAL.

Belongs to the SepF family. As to quaternary structure, homodimer. Interacts with FtsZ.

It localises to the cytoplasm. Cell division protein that is part of the divisome complex and is recruited early to the Z-ring. Probably stimulates Z-ring formation, perhaps through the cross-linking of FtsZ protofilaments. Its function overlaps with FtsA. The sequence is that of Cell division protein SepF from Prochlorococcus marinus (strain NATL1A).